Consider the following 132-residue polypeptide: Flagellar basal body rod protein FlgB (132 aa).

The protein belongs to the flagella basal body rod proteins family. As to quaternary structure, the basal body constitutes a major portion of the flagellar organelle and consists of a number of rings mounted on a central rod. In Gram-negative bacteria, at least four rings, L, P, S and M are present, whereas Gram-positive bacteria lack the L and P rings. The rod consists of about 26 subunits of FlgG in the distal portion, and FlgB, FlgC and FlgF build up the proximal portion of the rod with about 6 subunits each. Rod assembly occurs by export via the flagellum-specific pathway of its constituent proteins and by their incorporation into the rod structure in the probable order of FlgB, FlgC, FlgF and FlgG. Another protein, FliE, also assembles onto the stable rod structure.

The protein resides in the bacterial flagellum basal body. Structural component of flagellum, the bacterial motility apparatus. Part of the rod structure of flagellar basal body. In Aeromonas hydrophila, this protein is Flagellar basal body rod protein FlgB.